We begin with the raw amino-acid sequence, 97 residues long: RxLR effector protein CRE10 (97 aa).

The signal sequence occupies residues Met-1 to Ala-21. Positions Arg-48–Arg-66 match the RxLR-dEER motif.

Belongs to the RxLR effector family.

The protein localises to the secreted. Its subcellular location is the host cell. Effector that is involved in host plant infection. Contributes to virulence during the early infection stage, by inhibiting plant defense responses induced by both PAMP-triggered immunity (PTI) and effector-triggered immunity (ETI). This chain is RxLR effector protein CRE10, found in Phytophthora infestans (strain T30-4) (Potato late blight agent).